A 244-amino-acid polypeptide reads, in one-letter code: MTHKTDAIYAAPLQKMIDFQFDERVVAVFPDMIQRSVPGYGMIISNIGIVAAKYAQAGSHCYDLGCSLGAVSLAMRQRITQPDCDIIAVDNSPAMIARGRELLALDTAPTVPVTMICADLQEVAIENASVVVLNFTLQFIPPAERLALLERIHAGLRPGGVLILSEKIAFGEPGRQQFHEELHHDFKRANGYSDLEISQKRSALEKVLIPETLACHHERLQAAGFSFSELWFQCFNFASLVAMK.

S-adenosyl-L-methionine is bound by residues tyrosine 40, 65-67, 90-91, 119-120, asparagine 134, and arginine 201; these read GCS, DN, and DL.

It belongs to the class I-like SAM-binding methyltransferase superfamily. Cx-SAM synthase family. In terms of assembly, homodimer.

The catalysed reaction is prephenate + S-adenosyl-L-methionine = carboxy-S-adenosyl-L-methionine + 3-phenylpyruvate + H2O. Functionally, catalyzes the conversion of S-adenosyl-L-methionine (SAM) to carboxy-S-adenosyl-L-methionine (Cx-SAM). The sequence is that of Carboxy-S-adenosyl-L-methionine synthase from Geobacter metallireducens (strain ATCC 53774 / DSM 7210 / GS-15).